A 227-amino-acid chain; its full sequence is Cytochrome c oxidase subunit 2 (227 aa).

Residues 1-14 (MAHAAQVGLQDATS) are Mitochondrial intermembrane-facing. Residues 15–45 (PIMEELIIFHDHALMIIFLICFLVLYALFLT) form a helical membrane-spanning segment. The Mitochondrial matrix segment spans residues 46 to 59 (LTTKLTSTNISDAQ). A helical transmembrane segment spans residues 60–87 (EMETVWTILPAIILVLIALPSLRILYMT). Topologically, residues 88-227 (DEINDPSFTI…IFEMGPVFTL (140 aa)) are mitochondrial intermembrane. Cu cation contacts are provided by histidine 161, cysteine 196, glutamate 198, cysteine 200, histidine 204, and methionine 207. Glutamate 198 contributes to the Mg(2+) binding site.

This sequence belongs to the cytochrome c oxidase subunit 2 family. In terms of assembly, component of the cytochrome c oxidase (complex IV, CIV), a multisubunit enzyme composed of 14 subunits. The complex is composed of a catalytic core of 3 subunits MT-CO1, MT-CO2 and MT-CO3, encoded in the mitochondrial DNA, and 11 supernumerary subunits COX4I, COX5A, COX5B, COX6A, COX6B, COX6C, COX7A, COX7B, COX7C, COX8 and NDUFA4, which are encoded in the nuclear genome. The complex exists as a monomer or a dimer and forms supercomplexes (SCs) in the inner mitochondrial membrane with NADH-ubiquinone oxidoreductase (complex I, CI) and ubiquinol-cytochrome c oxidoreductase (cytochrome b-c1 complex, complex III, CIII), resulting in different assemblies (supercomplex SCI(1)III(2)IV(1) and megacomplex MCI(2)III(2)IV(2)). Found in a complex with TMEM177, COA6, COX18, COX20, SCO1 and SCO2. Interacts with TMEM177 in a COX20-dependent manner. Interacts with COX20. Interacts with COX16. Cu cation is required as a cofactor.

Its subcellular location is the mitochondrion inner membrane. It catalyses the reaction 4 Fe(II)-[cytochrome c] + O2 + 8 H(+)(in) = 4 Fe(III)-[cytochrome c] + 2 H2O + 4 H(+)(out). Component of the cytochrome c oxidase, the last enzyme in the mitochondrial electron transport chain which drives oxidative phosphorylation. The respiratory chain contains 3 multisubunit complexes succinate dehydrogenase (complex II, CII), ubiquinol-cytochrome c oxidoreductase (cytochrome b-c1 complex, complex III, CIII) and cytochrome c oxidase (complex IV, CIV), that cooperate to transfer electrons derived from NADH and succinate to molecular oxygen, creating an electrochemical gradient over the inner membrane that drives transmembrane transport and the ATP synthase. Cytochrome c oxidase is the component of the respiratory chain that catalyzes the reduction of oxygen to water. Electrons originating from reduced cytochrome c in the intermembrane space (IMS) are transferred via the dinuclear copper A center (CU(A)) of subunit 2 and heme A of subunit 1 to the active site in subunit 1, a binuclear center (BNC) formed by heme A3 and copper B (CU(B)). The BNC reduces molecular oxygen to 2 water molecules using 4 electrons from cytochrome c in the IMS and 4 protons from the mitochondrial matrix. The chain is Cytochrome c oxidase subunit 2 (MT-CO2) from Gorilla gorilla beringei (Mountain gorilla).